Here is a 142-residue protein sequence, read N- to C-terminus: Ribosome-binding factor A (142 aa).

Residues Glu119 to Thr142 are disordered. Residues Glu123–Thr142 are compositionally biased toward polar residues.

Belongs to the RbfA family. Monomer. Binds 30S ribosomal subunits, but not 50S ribosomal subunits or 70S ribosomes.

It is found in the cytoplasm. In terms of biological role, one of several proteins that assist in the late maturation steps of the functional core of the 30S ribosomal subunit. Associates with free 30S ribosomal subunits (but not with 30S subunits that are part of 70S ribosomes or polysomes). Required for efficient processing of 16S rRNA. May interact with the 5'-terminal helix region of 16S rRNA. The sequence is that of Ribosome-binding factor A from Prochlorococcus marinus (strain MIT 9303).